A 376-amino-acid chain; its full sequence is C-type lectin domain family 4 member M (376 aa).

Residues 1-49 (MSDSKEPRVQQLGLLEEDPTTSGIRLFPRDFQFQQIHGHKSSTGCLGHG) are Cytoplasmic-facing. The Endocytosis signal motif lies at 14-15 (LL). A helical; Signal-anchor for type II membrane protein transmembrane segment spans residues 50 to 70 (ALVLQLLSFTLLAGVLVAILV). Residues 71-376 (QVSKVPSSLS…KKPTVCFRDE (306 aa)) are Extracellular-facing. N-linked (GlcNAc...) asparagine glycosylation occurs at asparagine 92. 6 tandem repeats follow at residues 108-130 (KLQE…PEKS), 131-153 (KLQE…PEKS), 154-176 (KLQE…PEKS), 177-199 (KLQE…PEKS), 200-222 (KLQE…PDQS), and 223-245 (KQQQ…CRHC). The 6 X approximate tandem repeats stretch occupies residues 108–246 (KLQEIYQELT…AFERLCRHCP (139 aa)). 4 disulfides stabilise this stretch: cysteine 242/cysteine 372, cysteine 245/cysteine 256, cysteine 273/cysteine 366, and cysteine 345/cysteine 358. The C-type lectin domain maps to 251 to 367 (FFQGNCYFMS…CDVDNYWICK (117 aa)). Ca(2+) contacts are provided by glutamate 336, asparagine 338, serine 340, glutamate 343, asparagine 354, and aspartate 355. An N-linked (GlcNAc...) asparagine glycan is attached at asparagine 338.

As to quaternary structure, homotetramer.

Its subcellular location is the membrane. In terms of biological role, probable pathogen-recognition receptor involved in peripheral immune surveillance in liver. May mediate the endocytosis of pathogens which are subsequently degraded in lysosomal compartments. Probably recognizes in a calcium-dependent manner high mannose N-linked oligosaccharides in a variety of pathogen antigens. Is a receptor for ICAM3, probably by binding to mannose-like carbohydrates. The polypeptide is C-type lectin domain family 4 member M (CLEC4M) (Gorilla gorilla gorilla (Western lowland gorilla)).